Consider the following 367-residue polypeptide: uncharacterized protein (367 aa).

This sequence belongs to the mimivirus L17x/L18x family.

This is an uncharacterized protein from Acanthamoeba polyphaga (Amoeba).